Here is a 573-residue protein sequence, read N- to C-terminus: Dihydroxy-acid dehydratase (573 aa).

Residue C62 participates in [2Fe-2S] cluster binding. D94 serves as a coordination point for Mg(2+). Residue C135 participates in [2Fe-2S] cluster binding. D136 and K137 together coordinate Mg(2+). N6-carboxylysine is present on K137. C212 contributes to the [2Fe-2S] cluster binding site. Residue E463 coordinates Mg(2+). The active-site Proton acceptor is S489.

Belongs to the IlvD/Edd family. Homodimer. It depends on [2Fe-2S] cluster as a cofactor. Requires Mg(2+) as cofactor.

The enzyme catalyses (2R)-2,3-dihydroxy-3-methylbutanoate = 3-methyl-2-oxobutanoate + H2O. It catalyses the reaction (2R,3R)-2,3-dihydroxy-3-methylpentanoate = (S)-3-methyl-2-oxopentanoate + H2O. It participates in amino-acid biosynthesis; L-isoleucine biosynthesis; L-isoleucine from 2-oxobutanoate: step 3/4. Its pathway is amino-acid biosynthesis; L-valine biosynthesis; L-valine from pyruvate: step 3/4. Functionally, functions in the biosynthesis of branched-chain amino acids. Catalyzes the dehydration of (2R,3R)-2,3-dihydroxy-3-methylpentanoate (2,3-dihydroxy-3-methylvalerate) into 2-oxo-3-methylpentanoate (2-oxo-3-methylvalerate) and of (2R)-2,3-dihydroxy-3-methylbutanoate (2,3-dihydroxyisovalerate) into 2-oxo-3-methylbutanoate (2-oxoisovalerate), the penultimate precursor to L-isoleucine and L-valine, respectively. This chain is Dihydroxy-acid dehydratase, found in Arthrobacter sp. (strain FB24).